Consider the following 64-residue polypeptide: Carnocyclin-A (64 aa).

The propeptide occupies 1–4; the sequence is MLYE. The segment at residues 5–64 is a cross-link (cyclopeptide (Leu-Leu)); the sequence is LVAYGIAQGTAEKVVSLINAGLTVGSIISILGGVTVGLSGVFTAVKAAIAKQGIKKAIQL.

It localises to the secreted. Its function is as follows. Cyclopeptide antibiotic that inhibits the growth of Gram-positive bacteria, but has no effect on the growth of Gram-negative bacteria. The sequence is that of Carnocyclin-A from Carnobacterium maltaromaticum (Carnobacterium piscicola).